A 173-amino-acid chain; its full sequence is Membrane protein PM19L (173 aa).

A run of 4 helical transmembrane segments spans residues I9–W29, G43–V63, L83–L103, and F124–F144.

As to expression, expressed in roots, leaf blades, leaf sheaths, stems, spikelets and embryos.

The protein localises to the membrane. May be involved in abiotic stress response through abscisic acid-dependent signaling. The protein is Membrane protein PM19L of Oryza sativa subsp. japonica (Rice).